Reading from the N-terminus, the 123-residue chain is MALNIEEIIASVKEATVLELNDLVKAIEEEFGVTAAAPVAVAGGAAAGGAAEEKTEFDLVLAGAGDQKIKVIKVVREITGLGLKEAKELVDNTPKPLKEGIAKEEAEELKAKLEEVGASVEVK.

The protein belongs to the bacterial ribosomal protein bL12 family. Homodimer. Part of the ribosomal stalk of the 50S ribosomal subunit. Forms a multimeric L10(L12)X complex, where L10 forms an elongated spine to which 2 to 4 L12 dimers bind in a sequential fashion. Binds GTP-bound translation factors.

Its function is as follows. Forms part of the ribosomal stalk which helps the ribosome interact with GTP-bound translation factors. Is thus essential for accurate translation. This is Large ribosomal subunit protein bL12 from Bacillus licheniformis (strain ATCC 14580 / DSM 13 / JCM 2505 / CCUG 7422 / NBRC 12200 / NCIMB 9375 / NCTC 10341 / NRRL NRS-1264 / Gibson 46).